Here is a 426-residue protein sequence, read N- to C-terminus: 3-phosphoshikimate 1-carboxyvinyltransferase (426 aa).

The 3-phosphoshikimate site is built by K22, S23, and R27. K22 contributes to the phosphoenolpyruvate binding site. Phosphoenolpyruvate is bound by residues G96 and R124. 3-phosphoshikimate-binding residues include S170, S171, Q172, S198, D314, N337, and K341. Q172 provides a ligand contact to phosphoenolpyruvate. D314 serves as the catalytic Proton acceptor. Residues R345, R387, and K412 each contribute to the phosphoenolpyruvate site.

It belongs to the EPSP synthase family. As to quaternary structure, monomer.

Its subcellular location is the cytoplasm. It carries out the reaction 3-phosphoshikimate + phosphoenolpyruvate = 5-O-(1-carboxyvinyl)-3-phosphoshikimate + phosphate. It participates in metabolic intermediate biosynthesis; chorismate biosynthesis; chorismate from D-erythrose 4-phosphate and phosphoenolpyruvate: step 6/7. In terms of biological role, catalyzes the transfer of the enolpyruvyl moiety of phosphoenolpyruvate (PEP) to the 5-hydroxyl of shikimate-3-phosphate (S3P) to produce enolpyruvyl shikimate-3-phosphate and inorganic phosphate. This Aliivibrio fischeri (strain ATCC 700601 / ES114) (Vibrio fischeri) protein is 3-phosphoshikimate 1-carboxyvinyltransferase.